We begin with the raw amino-acid sequence, 367 residues long: Isoflavone 4'-O-methyltransferase (367 aa).

S-adenosyl-L-methionine contacts are provided by residues 209 to 212 (VGGG), aspartate 233, 233 to 234 (DQ), 253 to 254 (DM), and lysine 267. Catalysis depends on histidine 271, which acts as the Proton acceptor.

It belongs to the class I-like SAM-binding methyltransferase superfamily. Cation-independent O-methyltransferase family. COMT subfamily.

The enzyme catalyses a 4'-hydroxyisoflavone + S-adenosyl-L-methionine = a 4'-methoxyisoflavone + S-adenosyl-L-homocysteine + H(+). The catalysed reaction is (2R,3S)-2,4',7-trihydroxyisoflavanone + S-adenosyl-L-methionine = (2R,3S)-2,7-dihydroxy-4'-methoxyisoflavanone + S-adenosyl-L-homocysteine + H(+). In terms of biological role, 2-hydroxyisoflavanone 4'-O-methyltransferase involved in the biosynthesis of formononetin. Can use 2,7,4'-trihydroxyisoflavanone, (+)-6a-hydroxymaackiain or medicarpin as substrate, but not daidzein or (-)-6a-hydroxymaackiain. The polypeptide is Isoflavone 4'-O-methyltransferase (HI4'OMT) (Glycyrrhiza echinata (Licorice)).